A 186-amino-acid polypeptide reads, in one-letter code: Peptidyl-tRNA hydrolase (186 aa).

Tyr-14 serves as a coordination point for tRNA. The active-site Proton acceptor is the His-19. 3 residues coordinate tRNA: Tyr-64, Asn-66, and Asn-112.

It belongs to the PTH family. As to quaternary structure, monomer.

The protein localises to the cytoplasm. It carries out the reaction an N-acyl-L-alpha-aminoacyl-tRNA + H2O = an N-acyl-L-amino acid + a tRNA + H(+). Its function is as follows. Hydrolyzes ribosome-free peptidyl-tRNAs (with 1 or more amino acids incorporated), which drop off the ribosome during protein synthesis, or as a result of ribosome stalling. Functionally, catalyzes the release of premature peptidyl moieties from peptidyl-tRNA molecules trapped in stalled 50S ribosomal subunits, and thus maintains levels of free tRNAs and 50S ribosomes. The polypeptide is Peptidyl-tRNA hydrolase (Bacillus cytotoxicus (strain DSM 22905 / CIP 110041 / 391-98 / NVH 391-98)).